The chain runs to 938 residues: Catenin delta-1 (938 aa).

Position 1 is an N-acetylmethionine (Met-1). A necessary and sufficient for interaction with CCDC85B region spans residues 1–357 (MDDSEVESTA…ASLDSLRKGM (357 aa)). Ser-4 carries the phosphoserine modification. A coiled-coil region spans residues 10-46 (ASILASVKEQEAQFEKLTRALEEERRHVSAQLERVRV). Ser-47 bears the Phosphoserine mark. At Thr-59 the chain carries Phosphothreonine. Tyr-112 carries the post-translational modification Phosphotyrosine; by FYN. Ser-125 is subject to Phosphoserine. Tyr-217 and Tyr-221 each carry phosphotyrosine. Residue Ser-225 is modified to Phosphoserine. Tyr-228 carries the phosphotyrosine modification. Phosphoserine is present on residues Ser-230 and Ser-252. Position 257 is a phosphotyrosine (Tyr-257). Residues Ser-268 and Ser-269 each carry the phosphoserine modification. Tyr-280 is subject to Phosphotyrosine. Ser-288 bears the Phosphoserine mark. Tyr-291 is modified (phosphotyrosine). Phosphoserine is present on Ser-300. The residue at position 304 (Thr-304) is a Phosphothreonine. A phosphoserine mark is found at Ser-320, Ser-346, Ser-349, and Ser-352. ARM repeat units lie at residues 358-395 (PPPS…HLCY), 398-437 (DKVK…NISF), 441-475 (QDNK…ITGT), and 476-516 (LWNL…NEDC). A Glycyl lysine isopeptide (Lys-Gly) (interchain with G-Cter in SUMO2) cross-link involves residue Lys-421. Residue Lys-517 forms a Glycyl lysine isopeptide (Lys-Gly) (interchain with G-Cter in SUMO2) linkage. ARM repeat units lie at residues 534–573 (LRNV…DSDS), 583–624 (LRNL…AKKG), 653–693 (ARGY…NLCA), 700–739 (RYIR…NLAV), 740–780 (DARN…SILN), and 781–826 (TINE…ALVL). Ser-617 is subject to Phosphoserine. The Nuclear localization signal (NLS) motif lies at 622-629 (KKGKDEWF). A Phosphoserine modification is found at Ser-713. Phosphoserine occurs at positions 811, 847, 857, 859, 861, and 864. The disordered stretch occupies residues 855-938 (NASRSQSSHS…LKGAPLMQKI (84 aa)). Residue Tyr-865 is modified to Phosphotyrosine. Position 868 is a phosphoserine (Ser-868). The residue at position 869 (Thr-869) is a Phosphothreonine. Positions 875-888 (RNQKSDKKPDREEI) are enriched in basic and acidic residues. Ser-879 bears the Phosphoserine mark. Lys-882 participates in a covalent cross-link: Glycyl lysine isopeptide (Lys-Gly) (interchain with G-Cter in SUMO2). Polar residues predominate over residues 892 to 908 (NMGSNTKSLDNNYSTLN). Residue Ser-899 is modified to Phosphoserine. A Phosphotyrosine modification is found at Tyr-904. Residues Thr-906 and Thr-916 each carry the phosphothreonine modification. Positions 909-922 (ERGDHNRTLDRSGD) are enriched in basic and acidic residues. Ser-920 bears the Phosphoserine mark.

Belongs to the beta-catenin family. Belongs to a multiprotein cell-cell adhesion complex that also contains E-cadherin/CDH1, alpha-catenin/CTNNA1, beta-catenin/CTNNB1, and gamma-catenin/JUP. Binds to the C-terminal fragment of PSEN1 and mutually competes for CDH1. Interacts with ZBTB33. Interacts with GLIS2. Interacts with FER. Interacts with NANOS1 (via N-terminal region). Interacts (via N-terminus) with GNA12; the interaction regulates CDH1-mediated cell-cell adhesion. Interacts with GNA13. Component of a cadherin:catenin adhesion complex composed of at least of CDH26, beta-catenin/CTNNB1, alpha-catenin/CTNNA1 and p120 catenin/CTNND1. Interacts with CCDC85B. Interacts with PLPP3; negatively regulates the PLPP3-mediated stabilization of CTNNB1. Interacts with DSG3; the interaction facilitates DSG3 localization and retention at cell-cell junctions. Interacts with CTNND1/p120-catenin; the interaction controls CADH5 endocytosis. Post-translationally, phosphorylated by FER and other protein-tyrosine kinases. Phosphorylated at Ser-288 by PAK5. Dephosphorylated by PTPRJ. As to expression, expressed in basal keratinocytes (at protein level).

It localises to the cell junction. It is found in the adherens junction. The protein localises to the cytoplasm. Its subcellular location is the nucleus. The protein resides in the cell membrane. Functionally, key regulator of cell-cell adhesion that associates with and regulates the cell adhesion properties of both C-, E- and N-cadherins, being critical for their surface stability. Promotes localization and retention of DSG3 at cell-cell junctions, via its interaction with DSG3. Beside cell-cell adhesion, regulates gene transcription through several transcription factors including ZBTB33/Kaiso2 and GLIS2, and the activity of Rho family GTPases and downstream cytoskeletal dynamics. Implicated both in cell transformation by SRC and in ligand-induced receptor signaling through the EGF, PDGF, CSF-1 and ERBB2 receptors. The polypeptide is Catenin delta-1 (Ctnnd1) (Mus musculus (Mouse)).